A 72-amino-acid polypeptide reads, in one-letter code: Translation initiation factor IF-1 (72 aa).

The region spanning Met1–Lys72 is the S1-like domain.

It belongs to the IF-1 family. In terms of assembly, component of the 30S ribosomal translation pre-initiation complex which assembles on the 30S ribosome in the order IF-2 and IF-3, IF-1 and N-formylmethionyl-tRNA(fMet); mRNA recruitment can occur at any time during PIC assembly.

The protein localises to the cytoplasm. Its function is as follows. One of the essential components for the initiation of protein synthesis. Stabilizes the binding of IF-2 and IF-3 on the 30S subunit to which N-formylmethionyl-tRNA(fMet) subsequently binds. Helps modulate mRNA selection, yielding the 30S pre-initiation complex (PIC). Upon addition of the 50S ribosomal subunit IF-1, IF-2 and IF-3 are released leaving the mature 70S translation initiation complex. The sequence is that of Translation initiation factor IF-1 from Bartonella tribocorum (strain CIP 105476 / IBS 506).